The following is a 356-amino-acid chain: MPRPIVAKVDSAVLASNLSIVRRHAPQAQVWSVVKANGYGHGLNTVWQGLQQTDGFALLDLHEAVVLREKGWRGPILLLEGFFQPADLAVIDRYRLTTVVHSDWQIEALRRMTPRAPLDIYLKLNSGMNRLGFSERALPGAWQSLNALKHVATLTLMSHFAYADMPEGVEGQMAVVARAGEGLTGPRCLANSAATLWHPATHGQWVRPGIILYGASPSGNWQDIAASGLRPVMTLQSELIAVQSVPAGGRIGYGGRHRVSETHRVGVVACGYADGYPRHAPTGTPILVDGVRTSTLGAVSMDMLMVDLQLCPKARIGSAVELWGDHVKIDEVAASAGTLGYELMSALAPRVTVQIR.

Catalysis depends on K35, which acts as the Proton acceptor; specific for D-alanine. Position 35 is an N6-(pyridoxal phosphate)lysine (K35). Substrate is bound at residue R130. The active-site Proton acceptor; specific for L-alanine is Y253. Substrate is bound at residue M301.

Belongs to the alanine racemase family. The cofactor is pyridoxal 5'-phosphate.

It carries out the reaction L-alanine = D-alanine. It participates in amino-acid biosynthesis; D-alanine biosynthesis; D-alanine from L-alanine: step 1/1. In terms of biological role, catalyzes the interconversion of L-alanine and D-alanine. May also act on other amino acids. The chain is Alanine racemase (alr) from Sodalis glossinidius (strain morsitans).